The following is a 426-amino-acid chain: O-methyltransferase pyvH (426 aa).

S-adenosyl-L-methionine is bound by residues 258 to 259 (GG), D281, 308 to 309 (DF), and R323. Catalysis depends on H327, which acts as the Proton acceptor.

This sequence belongs to the class I-like SAM-binding methyltransferase superfamily. Cation-independent O-methyltransferase family.

It participates in secondary metabolite biosynthesis. O-methyltransferase; part of the gene cluster that mediates the biosynthesis of pyranoviolin A, a pyranonigrin analog with a C-3 methoxy group. Initially, the PKS portion of pyvA synthesizes C-10 carbon chain from 5 molecules of malonyl-CoA, which is then condensed with the thiolation (T) domain-bound glycine activated by the adenylation (A) domain. The subsequent chain release by Dieckmann condensation (DKC) could be catalyzed by the TE domain present at the C-terminus of pyvA and/or the alpha/beta hydrolase pyvD, installing the tetramic acid moiety. The FAD-dependent monooxygenase pyvC next epoxidizes one of the olefins of the polyketide part, and the epoxide ring-opening induces the dihydro-gamma-pyrone ring formation. The cytochrome P450 monooxygeanse pyvB would be responsible for the 2 consecutive reactions, in which the dihydro-gamma-pyrone is oxidized to gamma-pyrone and C-7 is hydroxylated to yield pyranonigrin F. Finally, the O-methyltransferase pyvH methylates the C-3 hydroxy group to complete the biosynthesis. The protein is O-methyltransferase pyvH of Aspergillus violaceofuscus (strain CBS 115571).